We begin with the raw amino-acid sequence, 90 residues long: Cell division protein CrgA (90 aa).

Residues 1 to 25 are disordered; that stretch reads MPKARVTKNETAPVSSNPSANRTPV. Polar residues predominate over residues 9–22; that stretch reads NETAPVSSNPSANR. The next 2 helical transmembrane spans lie at 38–58 and 67–87; these read VIMF…YLVG and LGAW…LMTM.

It belongs to the CrgA family.

The protein resides in the cell membrane. Involved in cell division. The sequence is that of Cell division protein CrgA from Corynebacterium glutamicum (strain R).